An 830-amino-acid polypeptide reads, in one-letter code: Leucine--tRNA ligase (830 aa).

Residues 42-52 (PYPSGNLHMGH) carry the 'HIGH' region motif. The 'KMSKS' region motif lies at 585 to 589 (KMSKS). K588 is a binding site for ATP.

This sequence belongs to the class-I aminoacyl-tRNA synthetase family.

The protein localises to the cytoplasm. The catalysed reaction is tRNA(Leu) + L-leucine + ATP = L-leucyl-tRNA(Leu) + AMP + diphosphate. This is Leucine--tRNA ligase from Halothermothrix orenii (strain H 168 / OCM 544 / DSM 9562).